The sequence spans 532 residues: Protein tweety homolog 2 (532 aa).

At 1–44 (MPAARVEYIAPWWVVWLHSVPHLGLRLQRVDSTFSPGDETYQES) the chain is on the extracellular side. Residues 45 to 65 (LLFLGVLAAIGLGLNLIFLTV) traverse the membrane as a helical segment. Over 66 to 87 (YLVCTCCCRRDHTVQTKQQESC) the chain is Cytoplasmic. A helical membrane pass occupies residues 88 to 108 (CVTWTAVVAGLLCCAAVGVGF). Over 109–213 (YGNSETNDGM…QTAYVEYYRW (105 aa)) the chain is Extracellular. Ca(2+) contacts are provided by Glu-113 and Asp-116. An N-linked (GlcNAc...) asparagine glycan is attached at Asn-129. The RGD signature appears at 164 to 166 (RGD). Thr-199 carries the post-translational modification Phosphothreonine. Residues 214–234 (LSYLLLFILDLVICLVTCLGL) form a helical membrane-spanning segment. Over 235 to 240 (ARRSKC) the chain is Cytoplasmic. The chain crosses the membrane as a helical span at residues 241–261 (LLASMLCCGILTLILSWASLA). The Extracellular portion of the chain corresponds to 262 to 385 (ADAAAAVGTS…DALTGICYDG (124 aa)). 2 cysteine pairs are disulfide-bonded: Cys-274-Cys-382 and Cys-300-Cys-367. N-linked (GlcNAc...) asparagine glycosylation is found at Asn-283 and Asn-352. Residues 386-406 (IEGLLFLGLFSLLAALAFSTL) traverse the membrane as a helical segment. The Cytoplasmic segment spans residues 407–532 (TCAGPRAWKY…EHLRHYEFPS (126 aa)). Ser-504 is subject to Phosphoserine. The PY-motif; mediates interaction with NEDD4L motif lies at 506–509 (PPTY).

It belongs to the tweety family. In terms of assembly, forms cis-homodimers in the presence of Ca(+2) and forms monomers and trans-dimers in the absence of Ca(2+). Interacts with NEDD4L. Post-translationally, ubiquitinated by NEDD4L, leading to its proteasomal degradation.

It localises to the cell membrane. The enzyme catalyses chloride(in) = chloride(out). The catalysed reaction is L-glutamate(out) = L-glutamate(in). With respect to regulation, inhibited by (4-[(2-butyl-6,7-dichloro-2- cyclopentyl-2,3-dihydro-1-oxo-1H-inden-5-yl)oxy]butanoic acid). Calcium-independent, swelling-dependent volume-regulated anion channel (VRAC-swell) which plays a pivotal role in the process of regulatory volume decrease (RVD) in the brain through the efflux of anions like chloride and organic osmolytes like glutamate. Probable large-conductance Ca(2+)-activated chloride channel. The polypeptide is Protein tweety homolog 2 (Ttyh2) (Mus musculus (Mouse)).